A 330-amino-acid chain; its full sequence is Protein RfbI (330 aa).

One can recognise a 2Fe-2S ferredoxin-type domain in the interval 3-89; that stretch reads HIIKIFPSNI…ELNAHFFPEL (87 aa). The [2Fe-2S] cluster site is built by Cys-37, Cys-42, and Cys-45. The region spanning 94–192 is the FAD-binding FR-type domain; the sequence is KKIVPCKVNS…EGPCGTFFIR (99 aa).

[2Fe-2S] cluster is required as a cofactor.

It functions in the pathway bacterial outer membrane biogenesis; LPS O-antigen biosynthesis. This is Protein RfbI (rfbI) from Salmonella typhimurium (strain LT2 / SGSC1412 / ATCC 700720).